Consider the following 265-residue polypeptide: tRNA pseudouridine synthase A (265 aa).

The active-site Nucleophile is Asp-52. Tyr-105 provides a ligand contact to substrate.

The protein belongs to the tRNA pseudouridine synthase TruA family.

The catalysed reaction is uridine(38/39/40) in tRNA = pseudouridine(38/39/40) in tRNA. In terms of biological role, formation of pseudouridine at positions 38, 39 and 40 in the anticodon stem and loop of transfer RNAs. The polypeptide is tRNA pseudouridine synthase A (Archaeoglobus fulgidus (strain ATCC 49558 / DSM 4304 / JCM 9628 / NBRC 100126 / VC-16)).